A 178-amino-acid polypeptide reads, in one-letter code: Caveolin-1 (178 aa).

Serine 2 carries the N-acetylserine modification. Serine 2 bears the Phosphoserine mark. Residues 2–94 (SGGKYVDSEG…WKASFTTFTV (93 aa)) form a required for homooligomerization region. Residues 2 to 104 (SGGKYVDSEG…TKYWFYRLLS (103 aa)) are Cytoplasmic-facing. Residue lysine 5 is modified to N6-acetyllysine; alternate. Lysine 5 participates in a covalent cross-link: Glycyl lysine isopeptide (Lys-Gly) (interchain with G-Cter in ubiquitin); alternate. Tyrosine 6 carries the post-translational modification Phosphotyrosine. A Phosphoserine modification is found at serine 9. The residue at position 14 (tyrosine 14) is a Phosphotyrosine; by ABL1. At tyrosine 25 the chain carries Phosphotyrosine. Glycyl lysine isopeptide (Lys-Gly) (interchain with G-Cter in ubiquitin) cross-links involve residues lysine 26, lysine 30, lysine 39, lysine 47, and lysine 57. Residues 82–94 (DGIWKASFTTFTV) form an interaction with CAVIN3 region. The segment at residues 105–125 (ALFGIPMALIWGIYFAILSFL) is an intramembrane region (helical). The Cytoplasmic segment spans residues 126 to 178 (HIWAVVPCIKSFLIEIQCISRVYSIYVHTFCDPLFEAIGKIFSNVRINLQKEI). The interval 131 to 142 (VPCIKSFLIEIQ) is interacts with SPRY1, SPRY2, SPRY3 and SPRY4. 3 S-palmitoyl cysteine lipidation sites follow: cysteine 133, cysteine 143, and cysteine 156. The interacts with SPRY1, SPRY2, and SPRY4 stretch occupies residues 149 to 160 (SIYVHTFCDPLF). The interacts with SPRY1, SPRY2, SPRY3 and SPRY4 stretch occupies residues 167–178 (FSNVRINLQKEI).

It belongs to the caveolin family. In terms of assembly, homooligomer. Interacts with GLIPR2. Interacts with NOSTRIN. Interacts with SNAP25 and STX1A. Interacts (via the N-terminus) with DPP4; the interaction is direct. Interacts with CTNNB1, CDH1 and JUP. Interacts with PACSIN2; this interaction induces membrane tubulation. Interacts with SLC7A9. Interacts with BMX and BTK. Interacts with TGFBR1. Interacts with CAVIN3 (via leucine-zipper domain) in a cholesterol-sensitive manner. Interacts with CAVIN1. Interacts with EHD2 in a cholesterol-dependent manner. Forms a ternary complex with UBXN6 and VCP; mediates CAV1 targeting to lysosomes for degradation. Interacts with ABCG1; this interaction regulates ABCG1-mediated cholesterol efflux. Interacts with NEU3; this interaction enhances NEU3 sialidase activity within caveola. Interacts (via C-terminus) with SPRY1, SPRY2 (via C-terminus), SPRY3, and SPRY4. Interacts with IGFBP5; this interaction allows trafficking of IGFBP5 from the plasma membrane to the nucleus. Phosphorylated at Tyr-14 by ABL1 in response to oxidative stress. In terms of processing, ubiquitinated. Undergo monoubiquitination and multi- and/or polyubiquitination. Monoubiquitination of N-terminal lysines promotes integration in a ternary complex with UBXN6 and VCP which promotes oligomeric CAV1 targeting to lysosomes for degradation. Ubiquitinated by ZNRF1; leading to degradation and modulation of the TLR4-mediated immune response.

It is found in the golgi apparatus membrane. Its subcellular location is the cell membrane. The protein resides in the membrane. It localises to the caveola. The protein localises to the membrane raft. May act as a scaffolding protein within caveolar membranes. Forms a stable heterooligomeric complex with CAV2 that targets to lipid rafts and drives caveolae formation. Mediates the recruitment of CAVIN proteins (CAVIN1/2/3/4) to the caveolae. Interacts directly with G-protein alpha subunits and can functionally regulate their activity. Involved in the costimulatory signal essential for T-cell receptor (TCR)-mediated T-cell activation. Its binding to DPP4 induces T-cell proliferation and NF-kappa-B activation in a T-cell receptor/CD3-dependent manner. Recruits CTNNB1 to caveolar membranes and may regulate CTNNB1-mediated signaling through the Wnt pathway. Negatively regulates TGFB1-mediated activation of SMAD2/3 by mediating the internalization of TGFBR1 from membrane rafts leading to its subsequent degradation. Binds 20(S)-hydroxycholesterol (20(S)-OHC). The polypeptide is Caveolin-1 (CAV1) (Equus caballus (Horse)).